The primary structure comprises 44 residues: Capsid protein G8P (44 aa).

Residues 1–18 (MQSVITDVTGQLTAVQAD) are Periplasmic-facing. A helical transmembrane segment spans residues 19 to 39 (ITTIGGAIIVLAAVVLGIRWI). Topologically, residues 40 to 44 (KAQFF) are cytoplasmic.

Belongs to the inovirus capsid protein family. As to quaternary structure, homomultimerizes. There are several thousand copies of this protein in the phage capsid.

The protein localises to the virion. Its subcellular location is the host cell inner membrane. Functionally, self assembles to form a helical capsid wrapping up the viral genomic DNA. The capsid displays a filamentous structure with a length of 760-1950 nm and a width of 6-8 nm. The virion assembly and budding take place at the host inner membrane. The sequence is that of Capsid protein G8P (VIII) from Pseudomonas aeruginosa (Bacteriophage Pf3).